Reading from the N-terminus, the 432-residue chain is C4-dicarboxylate transport protein (432 aa).

Helical transmembrane passes span 8-28 (ILYVQVLFAICVGILLGHYWP), 44-64 (LIKMIIGPIIFCTVVTGIAGM), 78-98 (LLYFEVVSTFALLIGLGAAHL), 148-168 (GDILQILLVSLFFGAALAVLG), 188-208 (IVHVITKVAPIGAFGAMAFTI), 222-242 (LIGTFYFTAIIFVLVVLGTIA), 307-327 (IYMTMAVIFIAQATGIELTLM), and 355-375 (AATLAVVPTIPVAGMVLILGI).

This sequence belongs to the dicarboxylate/amino acid:cation symporter (DAACS) (TC 2.A.23) family.

Its subcellular location is the cell inner membrane. Functionally, responsible for the transport of dicarboxylates such as succinate, fumarate, and malate from the periplasm across the membrane. The chain is C4-dicarboxylate transport protein from Cupriavidus necator (strain ATCC 17699 / DSM 428 / KCTC 22496 / NCIMB 10442 / H16 / Stanier 337) (Ralstonia eutropha).